Here is a 217-residue protein sequence, read N- to C-terminus: Adapter protein MecA (217 aa).

Belongs to the MecA family. In terms of assembly, homodimer.

Enables the recognition and targeting of unfolded and aggregated proteins to the ClpC protease or to other proteins involved in proteolysis. The protein is Adapter protein MecA of Listeria monocytogenes serotype 4b (strain CLIP80459).